Consider the following 406-residue polypeptide: Coenzyme A biosynthesis bifunctional protein CoaBC (406 aa).

The interval 2-190 (SLAGKKIVLG…SPVNDLKHLN (189 aa)) is phosphopantothenoylcysteine decarboxylase. Cys-158 serves as the catalytic Proton donor. The phosphopantothenate--cysteine ligase stretch occupies residues 191-406 (IMITAGPTRE…VTRYDEKNRR (216 aa)). Residues 273 to 275 (GCA), Asp-279, Lys-289, 308 to 311 (PDIV), Phe-327, Lys-341, and Lys-345 each bind CTP.

It in the N-terminal section; belongs to the HFCD (homo-oligomeric flavin containing Cys decarboxylase) superfamily. In the C-terminal section; belongs to the PPC synthetase family. Mg(2+) is required as a cofactor. The cofactor is FMN.

The catalysed reaction is N-[(R)-4-phosphopantothenoyl]-L-cysteine + H(+) = (R)-4'-phosphopantetheine + CO2. The enzyme catalyses (R)-4'-phosphopantothenate + L-cysteine + CTP = N-[(R)-4-phosphopantothenoyl]-L-cysteine + CMP + diphosphate + H(+). The protein operates within cofactor biosynthesis; coenzyme A biosynthesis; CoA from (R)-pantothenate: step 2/5. Its pathway is cofactor biosynthesis; coenzyme A biosynthesis; CoA from (R)-pantothenate: step 3/5. In terms of biological role, catalyzes two sequential steps in the biosynthesis of coenzyme A. In the first step cysteine is conjugated to 4'-phosphopantothenate to form 4-phosphopantothenoylcysteine. In the second step the latter compound is decarboxylated to form 4'-phosphopantotheine. In Escherichia coli O6:H1 (strain CFT073 / ATCC 700928 / UPEC), this protein is Coenzyme A biosynthesis bifunctional protein CoaBC.